The sequence spans 300 residues: Porphobilinogen deaminase (300 aa).

Position 239 is an S-(dipyrrolylmethanemethyl)cysteine (cysteine 239).

This sequence belongs to the HMBS family. In terms of assembly, monomer. Dipyrromethane is required as a cofactor.

It catalyses the reaction 4 porphobilinogen + H2O = hydroxymethylbilane + 4 NH4(+). It participates in porphyrin-containing compound metabolism; protoporphyrin-IX biosynthesis; coproporphyrinogen-III from 5-aminolevulinate: step 2/4. Its function is as follows. Tetrapolymerization of the monopyrrole PBG into the hydroxymethylbilane pre-uroporphyrinogen in several discrete steps. In Francisella tularensis subsp. holarctica (strain OSU18), this protein is Porphobilinogen deaminase.